The following is a 270-amino-acid chain: UPF0354 protein BCAH820_4810 (270 aa).

The protein belongs to the UPF0354 family.

This is UPF0354 protein BCAH820_4810 from Bacillus cereus (strain AH820).